Consider the following 311-residue polypeptide: Forkhead box protein I2 (311 aa).

A DNA-binding region (fork-head) is located at residues 99 to 193; it reads RPPYSYSALI…DNGNFRRKRR (95 aa). Disordered stretches follow at residues 188–237 and 263–294; these read FRRK…TTTC and FSLR…QTGA. The span at 219-231 shows a compositional bias: low complexity; the sequence is STPQDPQTSPSPS.

Its subcellular location is the nucleus. Possible transcriptional activator. This Mus musculus (Mouse) protein is Forkhead box protein I2.